The sequence spans 124 residues: NAD(P)H-quinone oxidoreductase subunit 5, chloroplastic (124 aa).

The next 3 membrane-spanning stretches (helical) occupy residues 22-42 (TPIS…FLVA), 44-64 (LLPL…IGII), and 91-111 (LGYM…FHLI).

It belongs to the complex I subunit 5 family. As to quaternary structure, NDH is composed of at least 16 different subunits, 5 of which are encoded in the nucleus.

It localises to the plastid. It is found in the chloroplast thylakoid membrane. It carries out the reaction a plastoquinone + NADH + (n+1) H(+)(in) = a plastoquinol + NAD(+) + n H(+)(out). It catalyses the reaction a plastoquinone + NADPH + (n+1) H(+)(in) = a plastoquinol + NADP(+) + n H(+)(out). Its function is as follows. NDH shuttles electrons from NAD(P)H:plastoquinone, via FMN and iron-sulfur (Fe-S) centers, to quinones in the photosynthetic chain and possibly in a chloroplast respiratory chain. The immediate electron acceptor for the enzyme in this species is believed to be plastoquinone. Couples the redox reaction to proton translocation, and thus conserves the redox energy in a proton gradient. This Pisum sativum (Garden pea) protein is NAD(P)H-quinone oxidoreductase subunit 5, chloroplastic (ndhF).